We begin with the raw amino-acid sequence, 336 residues long: Phospho-N-acetylmuramoyl-pentapeptide-transferase (336 aa).

10 helical membrane passes run L3 to I23, G53 to I73, S78 to L98, L118 to I138, V143 to V163, G174 to A194, F200 to N220, V226 to A246, W251 to V271, and A316 to F336.

The protein belongs to the glycosyltransferase 4 family. MraY subfamily. The cofactor is Mg(2+).

The protein localises to the cell membrane. It carries out the reaction UDP-N-acetyl-alpha-D-muramoyl-L-alanyl-gamma-D-glutamyl-L-lysyl-D-alanyl-D-alanine + di-trans,octa-cis-undecaprenyl phosphate = Mur2Ac(oyl-L-Ala-gamma-D-Glu-L-Lys-D-Ala-D-Ala)-di-trans,octa-cis-undecaprenyl diphosphate + UMP. It functions in the pathway cell wall biogenesis; peptidoglycan biosynthesis. Catalyzes the initial step of the lipid cycle reactions in the biosynthesis of the cell wall peptidoglycan: transfers peptidoglycan precursor phospho-MurNAc-pentapeptide from UDP-MurNAc-pentapeptide onto the lipid carrier undecaprenyl phosphate, yielding undecaprenyl-pyrophosphoryl-MurNAc-pentapeptide, known as lipid I. The polypeptide is Phospho-N-acetylmuramoyl-pentapeptide-transferase (Streptococcus pyogenes serotype M5 (strain Manfredo)).